A 327-amino-acid polypeptide reads, in one-letter code: PDZ and LIM domain protein 1 (327 aa).

Position 2 is an N-acetylthreonine (Thr-2). Residues Thr-3–Glu-85 form the PDZ domain. 2 positions are modified to phosphoserine: Ser-90 and Ser-130. Tyr-142 bears the Phosphotyrosine mark. The disordered stretch occupies residues Val-161–Gly-184. In terms of domain architecture, LIM zinc-binding spans Pro-256–Pro-315. 8 residues coordinate Zn(2+): Cys-258, Cys-261, His-278, Cys-281, Cys-284, Cys-287, Cys-305, and His-308. Thr-314 is subject to Phosphothreonine. Phosphotyrosine is present on Tyr-319.

Interacts with ACTN1, ACTN2 and ACTN4. Interacts with PDLIM4. In terms of tissue distribution, expressed in heart, lung, spleen, testis and skeletal muscle.

It localises to the cytoplasm. The protein localises to the cytoskeleton. Its subcellular location is the myofibril. The protein resides in the sarcomere. It is found in the z line. In terms of biological role, cytoskeletal protein that may act as an adapter that brings other proteins (like kinases) to the cytoskeleton. Involved in assembly, disassembly and directioning of stress fibers in fibroblasts. Required for the localization of ACTN1 and PALLD to stress fibers. Required for cell migration and in maintaining cell polarity of fibroblasts. The protein is PDZ and LIM domain protein 1 (Pdlim1) of Mus musculus (Mouse).